Consider the following 212-residue polypeptide: Adenylate kinase (212 aa).

Residue 14–19 participates in ATP binding; it reads GSGKGT. Residues 34–63 form an NMP region; that stretch reads STGDLFRKKISEDSRFAAQIQNYLSSGSYV. Residues T35, R40, 61–63, 89–92, and Q96 each bind AMP; these read SYV and GYPR. Positions 126–163 are LID; sequence QRLFCQKCQKSYNLLLAKPKNGLKCDLDNTDLITRNDD. ATP is bound at residue R127. Positions 130 and 133 each coordinate Zn(2+). 136–137 contributes to the ATP binding site; the sequence is SY. The Zn(2+) site is built by C150 and D153. Residues R160 and R171 each contribute to the AMP site. An ATP-binding site is contributed by Q199.

Belongs to the adenylate kinase family. As to quaternary structure, monomer.

It is found in the cytoplasm. It carries out the reaction AMP + ATP = 2 ADP. Its pathway is purine metabolism; AMP biosynthesis via salvage pathway; AMP from ADP: step 1/1. Catalyzes the reversible transfer of the terminal phosphate group between ATP and AMP. Plays an important role in cellular energy homeostasis and in adenine nucleotide metabolism. The protein is Adenylate kinase of Mesomycoplasma hyopneumoniae (strain 232) (Mycoplasma hyopneumoniae).